Here is a 62-residue protein sequence, read N- to C-terminus: UPF0291 protein CLD_1956 (62 aa).

This sequence belongs to the UPF0291 family.

It is found in the cytoplasm. The chain is UPF0291 protein CLD_1956 from Clostridium botulinum (strain Okra / Type B1).